The following is a 185-amino-acid chain: Acireductone dioxygenase (185 aa).

Positions 101, 103, 107, and 145 each coordinate Fe(2+). Ni(2+) contacts are provided by histidine 101, histidine 103, glutamate 107, and histidine 145.

The protein belongs to the acireductone dioxygenase (ARD) family. As to quaternary structure, monomer. Fe(2+) is required as a cofactor. It depends on Ni(2+) as a cofactor.

The catalysed reaction is 1,2-dihydroxy-5-(methylsulfanyl)pent-1-en-3-one + O2 = 3-(methylsulfanyl)propanoate + CO + formate + 2 H(+). It carries out the reaction 1,2-dihydroxy-5-(methylsulfanyl)pent-1-en-3-one + O2 = 4-methylsulfanyl-2-oxobutanoate + formate + 2 H(+). It participates in amino-acid biosynthesis; L-methionine biosynthesis via salvage pathway; L-methionine from S-methyl-5-thio-alpha-D-ribose 1-phosphate: step 5/6. Functionally, catalyzes 2 different reactions between oxygen and the acireductone 1,2-dihydroxy-3-keto-5-methylthiopentene (DHK-MTPene) depending upon the metal bound in the active site. Fe-containing acireductone dioxygenase (Fe-ARD) produces formate and 2-keto-4-methylthiobutyrate (KMTB), the alpha-ketoacid precursor of methionine in the methionine recycle pathway. Ni-containing acireductone dioxygenase (Ni-ARD) produces methylthiopropionate, carbon monoxide and formate, and does not lie on the methionine recycle pathway. The protein is Acireductone dioxygenase of Synechococcus sp. (strain RCC307).